The chain runs to 802 residues: Phenylalanine--tRNA ligase beta subunit (802 aa).

The tRNA-binding domain occupies lysine 38–alanine 149. A B5 domain is found at histidine 399–proline 474. Residues aspartate 452, aspartate 458, glutamate 461, and glutamate 462 each contribute to the Mg(2+) site. Positions serine 708–arginine 801 constitute an FDX-ACB domain.

Belongs to the phenylalanyl-tRNA synthetase beta subunit family. Type 1 subfamily. Tetramer of two alpha and two beta subunits. Mg(2+) serves as cofactor.

The protein localises to the cytoplasm. It catalyses the reaction tRNA(Phe) + L-phenylalanine + ATP = L-phenylalanyl-tRNA(Phe) + AMP + diphosphate + H(+). The protein is Phenylalanine--tRNA ligase beta subunit of Mesorhizobium japonicum (strain LMG 29417 / CECT 9101 / MAFF 303099) (Mesorhizobium loti (strain MAFF 303099)).